We begin with the raw amino-acid sequence, 469 residues long: 3-isopropylmalate dehydratase large subunit (469 aa).

Positions 350, 410, and 413 each coordinate [4Fe-4S] cluster.

The protein belongs to the aconitase/IPM isomerase family. LeuC type 1 subfamily. In terms of assembly, heterodimer of LeuC and LeuD. [4Fe-4S] cluster serves as cofactor.

It catalyses the reaction (2R,3S)-3-isopropylmalate = (2S)-2-isopropylmalate. It participates in amino-acid biosynthesis; L-leucine biosynthesis; L-leucine from 3-methyl-2-oxobutanoate: step 2/4. In terms of biological role, catalyzes the isomerization between 2-isopropylmalate and 3-isopropylmalate, via the formation of 2-isopropylmaleate. The polypeptide is 3-isopropylmalate dehydratase large subunit (Rhizobium etli (strain CIAT 652)).